We begin with the raw amino-acid sequence, 181 residues long: ATP-dependent protease subunit HslV (181 aa).

T7 is a catalytic residue. Residues G166, C169, and T172 each coordinate Na(+).

This sequence belongs to the peptidase T1B family. HslV subfamily. A double ring-shaped homohexamer of HslV is capped on each side by a ring-shaped HslU homohexamer. The assembly of the HslU/HslV complex is dependent on binding of ATP.

The protein resides in the cytoplasm. The enzyme catalyses ATP-dependent cleavage of peptide bonds with broad specificity.. Allosterically activated by HslU binding. In terms of biological role, protease subunit of a proteasome-like degradation complex believed to be a general protein degrading machinery. This Delftia acidovorans (strain DSM 14801 / SPH-1) protein is ATP-dependent protease subunit HslV.